The primary structure comprises 1339 residues: DNA-directed RNA polymerase subunit beta'' (1339 aa).

Zn(2+) contacts are provided by cysteine 226, cysteine 299, cysteine 306, and cysteine 309.

The protein belongs to the RNA polymerase beta' chain family. RpoC2 subfamily. In plastids the minimal PEP RNA polymerase catalytic core is composed of four subunits: alpha, beta, beta', and beta''. When a (nuclear-encoded) sigma factor is associated with the core the holoenzyme is formed, which can initiate transcription. It depends on Zn(2+) as a cofactor.

It is found in the plastid. Its subcellular location is the chloroplast. It catalyses the reaction RNA(n) + a ribonucleoside 5'-triphosphate = RNA(n+1) + diphosphate. DNA-dependent RNA polymerase catalyzes the transcription of DNA into RNA using the four ribonucleoside triphosphates as substrates. The sequence is that of DNA-directed RNA polymerase subunit beta'' from Cycas taitungensis (Prince sago).